Consider the following 838-residue polypeptide: Collagen alpha-2(I) chain (838 aa).

Positions Gly-1 to Ser-838 are disordered. Residues Phe-11–Lys-38 are compositionally biased toward low complexity. Over residues Ala-39–Glu-53 the composition is skewed to basic and acidic residues. 4 stretches are compositionally biased toward low complexity: residues Ser-101–Pro-122, Pro-137–Ala-147, Asn-215–Pro-236, and Ala-329–Gln-344. Over residues Gly-351 to Gly-360 the composition is skewed to gly residues. 2 stretches are compositionally biased toward low complexity: residues Pro-407 to Pro-424 and Glu-436 to Ala-446. Residues Gly-447–Gly-456 show a composition bias toward gly residues. Low complexity-rich tracts occupy residues Val-479–Thr-523, Val-530–Ala-550, and Ser-568–Ala-581. Positions Gly-582–Gly-591 are enriched in gly residues. Low complexity predominate over residues Thr-593–Thr-602. The span at Gly-633–Gly-642 shows a compositional bias: gly residues. Residues Thr-649 to Pro-689 show a composition bias toward low complexity. The span at Gly-693–Gly-702 shows a compositional bias: gly residues. 3 stretches are compositionally biased toward low complexity: residues Val-703 to Asn-718, Tyr-736 to Ala-758, and Glu-766 to Pro-781.

It belongs to the fibrillar collagen family. As to quaternary structure, trimers of one alpha 2(I) and two alpha 1(I) chains. Interacts (via C-terminus) with TMEM131 (via PapD-L domain); the interaction is direct and is involved in assembly and TRAPPIII ER-to-Golgi transport complex-dependent secretion of collagen. Post-translationally, prolines at the third position of the tripeptide repeating unit (G-X-Y) are hydroxylated in some or all of the chains. As to expression, forms the fibrils of tendon, ligaments and bones. In bones, the fibrils are mineralized with calcium hydroxyapatite.

It is found in the secreted. The protein resides in the extracellular space. It localises to the extracellular matrix. Functionally, type I collagen is a member of group I collagen (fibrillar forming collagen). The sequence is that of Collagen alpha-2(I) chain from Cyclopes didactylus (Silky anteater).